The primary structure comprises 255 residues: Type III pantothenate kinase (255 aa).

7 to 14 (DVGNTRLK) is a binding site for ATP. Residues tyrosine 96 and 103–106 (GADR) contribute to the substrate site. Aspartate 105 serves as the catalytic Proton acceptor. Residue threonine 133 coordinates ATP. Substrate is bound at residue threonine 183.

This sequence belongs to the type III pantothenate kinase family. In terms of assembly, homodimer. Requires NH4(+) as cofactor. The cofactor is K(+).

It is found in the cytoplasm. It catalyses the reaction (R)-pantothenate + ATP = (R)-4'-phosphopantothenate + ADP + H(+). It functions in the pathway cofactor biosynthesis; coenzyme A biosynthesis; CoA from (R)-pantothenate: step 1/5. Catalyzes the phosphorylation of pantothenate (Pan), the first step in CoA biosynthesis. This is Type III pantothenate kinase from Albidiferax ferrireducens (strain ATCC BAA-621 / DSM 15236 / T118) (Rhodoferax ferrireducens).